The following is an 809-amino-acid chain: MKGTPQYHFIGIGGIGMSALAHILLDRGYEVSGSDLYESYTIESLKAKGARCFSGHDSSHVPHDAVVVYSSSIAPDNVEYLTAIQRSSRLLHRAELLSQLMEGYESILVSGSHGKTGTSSLIRAIFQEAQKDPSYAIGGLAANCLNGYSGSSKIFVAEADESDGSLKHYTPRAVVITNIDNEHLNNYAGNLDNLVQVIQDFSRKVTDLNKVFYNGDCPILKGNVQGISYGYSPECQLHIVSYNQKAWQSHFSFTFLGQEYQDIELNLPGQHNAANAAAACGVALTFGIDINIIRKALKKFSGVHRRLERKNISESFLFLEDYAHHPVEVAHTLRSVRDAVGLRRVIAIFQPHRFSRLEECLQTFPKAFQEADEVILTDVYSAGESPRESIILSDLAEQIRKSSYVHCCYVPHGDIVDYLRNYIRIHDVCVSLGAGNIYTIGEALKDFNPKKLSIGLVCGGKSCEHDISLLSAQHVSKYISPEFYDVSYFIINRQGLWRTGKDFPHLIEETQGDSPLSSEIASALAKVDCLFPVLHGPFGEDGTIQGFFEILGKPYAGPSLSLAATAMDKLLTKRIASAVGVPVVPYQPLNLCFWKRNPELCIQNLIETFSFPMIVKTAHLGSSIGIFLVRDKEELQEKISEAFLYDTDVFVEESRLGSREIEVSCIGHSSSWYCMAGPNERCGASGFIDYQEKYGFDGIDCAKISFDLQLSQESLDCVRELAERVYRAMQGKGSARIDFFLDEEGNYWLSEVNPIPGMTAASPFLQAFVHAGWTQEQIVDHFIIDALHKFDKQQTIEQAFTKEQDLVKR.

Residues 1–450 form a UDP-N-acetylmuramate--alanine ligase region; the sequence is MKGTPQYHFI…GEALKDFNPK (450 aa). Residues 111 to 117 and 606 to 661 each bind ATP; these read GSHGKTG and IETF…SREI. The tract at residues 451 to 809 is D-alanine--D-alanine ligase; sequence KLSIGLVCGG…FTKEQDLVKR (359 aa). The 212-residue stretch at 573 to 784 folds into the ATP-grasp domain; that stretch reads KRIASAVGVP…QEQIVDHFII (212 aa). The Mg(2+) site is built by Asp738, Glu751, and Asn753.

In the N-terminal section; belongs to the MurCDEF family. The protein in the C-terminal section; belongs to the D-alanine--D-alanine ligase family. Mg(2+) is required as a cofactor. The cofactor is Mn(2+).

The protein localises to the cytoplasm. It catalyses the reaction UDP-N-acetyl-alpha-D-muramate + L-alanine + ATP = UDP-N-acetyl-alpha-D-muramoyl-L-alanine + ADP + phosphate + H(+). It carries out the reaction 2 D-alanine + ATP = D-alanyl-D-alanine + ADP + phosphate + H(+). It functions in the pathway cell wall biogenesis; peptidoglycan biosynthesis. Functionally, cell wall formation. This chain is Bifunctional enzyme MurC/Ddl (murC/ddl), found in Chlamydia pneumoniae (Chlamydophila pneumoniae).